Reading from the N-terminus, the 251-residue chain is Azurocidin (251 aa).

The signal sequence occupies residues 1–19; it reads MTRLTVLALLAGLLASSRA. A propeptide spans 20–26 (removed in mature form); it reads GSSPLLD. A propeptide spans 25 to 26 (dipeptide found in non-mature form); the sequence is LD. Residues 27-244 enclose the Peptidase S1 domain; it reads IVGGRKARPR…FRDWIDGVLN (218 aa). Positions 46–70 are possesses antibiotic activity; it reads NQGRHFCGGALIHARFVMTAASCFQ. Cysteines 52 and 68 form a disulfide. N-linked (GlcNAc...) asparagine; partial glycosylation occurs at N126. N-linked (GlcNAc...) asparagine glycosylation occurs at N140. 3 disulfides stabilise this stretch: C149-C207, C180-C186, and C197-C222. N171 is a glycosylation site (N-linked (GlcNAc...) asparagine; partial). The propeptide at 249-251 is removed in mature form; it reads GPA.

The protein belongs to the peptidase S1 family. Elastase subfamily. Cleavage of the N-terminal propeptide which is composed of 7 amino acids occurs in two steps. The initial cleavage of 5 amino acids is followed by the cleavage of a dipeptide to produce the mature form.

Its subcellular location is the cytoplasmic granule membrane. Functionally, this is a neutrophil granule-derived antibacterial and monocyte- and fibroblast-specific chemotactic glycoprotein. Binds heparin. The cytotoxic action is limited to many species of Gram-negative bacteria; this specificity may be explained by a strong affinity of the very basic N-terminal half for the negatively charged lipopolysaccharides that are unique to the Gram-negative bacterial outer envelope. It may play a role in mediating recruitment of monocytes in the second wave of inflammation. Has antibacterial activity against the Gram-negative bacterium P.aeruginosa, this activity is inhibited by LPS from P.aeruginosa. Acting alone, it does not have antimicrobial activity against the Gram-negative bacteria A.actinomycetemcomitans ATCC 29532, A.actinomycetemcomitans NCTC 9709, A.actinomycetemcomitans FDC-Y4, H.aphrophilus ATCC 13252, E.corrodens ATCC 23834, C.sputigena ATCC 33123, Capnocytophaga sp ATCC 33124, Capnocytophaga sp ATCC 27872 or E.coli ML-35. Has antibacterial activity against C.sputigena ATCC 33123 when acting synergistically with either elastase or cathepsin G. The sequence is that of Azurocidin from Homo sapiens (Human).